The following is a 279-amino-acid chain: 4-hydroxy-3-methylbut-2-enyl diphosphate reductase (279 aa).

Residue cysteine 12 coordinates [4Fe-4S] cluster. Residues histidine 40 and histidine 70 each coordinate (2E)-4-hydroxy-3-methylbut-2-enyl diphosphate. Dimethylallyl diphosphate contacts are provided by histidine 40 and histidine 70. Histidine 40 and histidine 70 together coordinate isopentenyl diphosphate. [4Fe-4S] cluster is bound at residue cysteine 92. Position 119 (histidine 119) interacts with (2E)-4-hydroxy-3-methylbut-2-enyl diphosphate. Histidine 119 is a binding site for dimethylallyl diphosphate. Histidine 119 provides a ligand contact to isopentenyl diphosphate. The Proton donor role is filled by glutamate 121. A (2E)-4-hydroxy-3-methylbut-2-enyl diphosphate-binding site is contributed by threonine 151. Residue cysteine 181 participates in [4Fe-4S] cluster binding. (2E)-4-hydroxy-3-methylbut-2-enyl diphosphate is bound by residues serine 209, serine 210, asparagine 211, and serine 251. Dimethylallyl diphosphate contacts are provided by serine 209, serine 210, asparagine 211, and serine 251. Residues serine 209, serine 210, asparagine 211, and serine 251 each coordinate isopentenyl diphosphate.

The protein belongs to the IspH family. The cofactor is [4Fe-4S] cluster.

The catalysed reaction is isopentenyl diphosphate + 2 oxidized [2Fe-2S]-[ferredoxin] + H2O = (2E)-4-hydroxy-3-methylbut-2-enyl diphosphate + 2 reduced [2Fe-2S]-[ferredoxin] + 2 H(+). It carries out the reaction dimethylallyl diphosphate + 2 oxidized [2Fe-2S]-[ferredoxin] + H2O = (2E)-4-hydroxy-3-methylbut-2-enyl diphosphate + 2 reduced [2Fe-2S]-[ferredoxin] + 2 H(+). The protein operates within isoprenoid biosynthesis; dimethylallyl diphosphate biosynthesis; dimethylallyl diphosphate from (2E)-4-hydroxy-3-methylbutenyl diphosphate: step 1/1. It functions in the pathway isoprenoid biosynthesis; isopentenyl diphosphate biosynthesis via DXP pathway; isopentenyl diphosphate from 1-deoxy-D-xylulose 5-phosphate: step 6/6. Its function is as follows. Catalyzes the conversion of 1-hydroxy-2-methyl-2-(E)-butenyl 4-diphosphate (HMBPP) into a mixture of isopentenyl diphosphate (IPP) and dimethylallyl diphosphate (DMAPP). Acts in the terminal step of the DOXP/MEP pathway for isoprenoid precursor biosynthesis. The sequence is that of 4-hydroxy-3-methylbut-2-enyl diphosphate reductase from Thermotoga neapolitana (strain ATCC 49049 / DSM 4359 / NBRC 107923 / NS-E).